The sequence spans 1043 residues: Isoleucine--tRNA ligase (1043 aa).

Residues proline 46 and histidine 57 each coordinate L-isoleucyl-5'-AMP. The 'HIGH' region signature appears at 47–57 (PTANGLPHVGH). Positions 181 and 184 each coordinate Zn(2+). The L-valine site is built by histidine 319 and aspartate 328. 6 residues coordinate Zn(2+): cysteine 389, cysteine 392, cysteine 461, cysteine 464, cysteine 502, and cysteine 504. 5 residues coordinate L-isoleucyl-5'-AMP: glutamate 550, glycine 551, aspartate 553, glutamine 554, and histidine 581. The 'KMSKS' region motif lies at 591 to 595 (KMSKS). Residue lysine 594 participates in ATP binding.

It belongs to the class-I aminoacyl-tRNA synthetase family. IleS type 2 subfamily. In terms of assembly, monomer. Zn(2+) is required as a cofactor.

The protein resides in the cytoplasm. It carries out the reaction tRNA(Ile) + L-isoleucine + ATP = L-isoleucyl-tRNA(Ile) + AMP + diphosphate. Its function is as follows. Catalyzes the attachment of isoleucine to tRNA(Ile). As IleRS can inadvertently accommodate and process structurally similar amino acids such as valine, to avoid such errors it has two additional distinct tRNA(Ile)-dependent editing activities. One activity is designated as 'pretransfer' editing and involves the hydrolysis of activated Val-AMP. The other activity is designated 'posttransfer' editing and involves deacylation of mischarged Val-tRNA(Ile). The chain is Isoleucine--tRNA ligase (ileS) from Thermus thermophilus (strain ATCC 27634 / DSM 579 / HB8).